Consider the following 741-residue polypeptide: MAETVSPLKHFVLAKKAITAIFGQLLEFVTEGSHFVEATYRNPELDRIASEDDLVEIQGYRNKLAVIGEVLSRRHMKVAFFGRTSSGKSSVINAMLWDKVLPSGIGHTTNCFLSVEGTDGDKAYLMTEGSDEKKSVKTVNQLAHALHMDKDLKAGCLVHVFWPKAKCALLRDDLVLVDSPGTDVTTELDIWIDKFCLDADVFVLVANSESTLMNTEKHFFHKVNERLSKPNIFILNNRWDASASEPEYMEDVRRQHMERCLHFLVEELKVVSPSEARNRIFFVSAKEVLNSRKHKAQGMPEGGGALAEGFQARLQEFQNFEQTFEECISQSAVKTKFEQHTIRAKQILDTVKNILDSVNVAAAEKRVYSMEEREDQIDRLDFIRNQMNLLTLDVKKKIKEVTEEVANKVSCAMTDEICRLSVLVDEFCSEFHPTPSVLKVYKSELNKHIEDGMGRNLADRCTNEVNASILQSQQEIIENLKPLLPAGIQNKLHTLIPCKKFDLSYDLNCHKLCSDFQEDIVFRFSLGWSSLVHRFLGSTNAQRVLLGLSEPIFQVPRSLASTPTAPSNPAAPDNAAQEELMITLITGLASLTSRTSMGIIVVGGVIWKTVGWKLISVTLSMYGALYLYERLTWTTRAKERAFKQQFVNYATEKLQMIVSFTSANCSHQVQQEMATTFARLCQQVDVTQKHLEEEIARLSKEIDQLEKIQNNSKLLRNKAVQLESELENFSKQFLHPSSGES.

Residues 1–584 (MAETVSPLKH…AAQEELMITL (584 aa)) are Cytoplasmic-facing. The part of a helix bundle domain, formed by helices from N-terminal and C-terminal regions stretch occupies residues 9–73 (KHFVLAKKAI…LAVIGEVLSR (65 aa)). Residues 72–321 (SRRHMKVAFF…ARLQEFQNFE (250 aa)) form the Dynamin-type G domain. The interval 82–89 (GRTSSGKS) is G1 motif. A GTP-binding site is contributed by 85–90 (SSGKSS). A G2 motif region spans residues 108 to 109 (TT). A G3 motif region spans residues 178 to 181 (DSPG). 237-240 (NRWD) serves as a coordination point for GTP. Residues 237–240 (NRWD) form a G4 motif region. Residue E266 is a region of interest, G5 motif. The GTP site is built by S284 and K286. The part of a helix bundle domain, formed by helices from N-terminal and C-terminal regions stretch occupies residues 338–364 (EQHTIRAKQILDTVKNILDSVNVAAAE). The stretch at 371 to 408 (EEREDQIDRLDFIRNQMNLLTLDVKKKIKEVTEEVANK) forms a coiled coil. Residues 585–605 (ITGLASLTSRTSMGIIVVGGV) traverse the membrane as a helical segment. Residues 606–608 (IWK) are Mitochondrial intermembrane-facing. A helical transmembrane segment spans residues 609 to 629 (TVGWKLISVTLSMYGALYLYE). Residues 630–741 (RLTWTTRAKE…QFLHPSSGES (112 aa)) are Cytoplasmic-facing. A coiled-coil region spans residues 677–735 (FARLCQQVDVTQKHLEEEIARLSKEIDQLEKIQNNSKLLRNKAVQLESELENFSKQFLH). A part of a helix bundle domain, formed by helices from N-terminal and C-terminal regions region spans residues 703–734 (DQLEKIQNNSKLLRNKAVQLESELENFSKQFL).

It belongs to the TRAFAC class dynamin-like GTPase superfamily. Dynamin/Fzo/YdjA family. Mitofusin subfamily. In terms of assembly, homodimer, also in the absence of bound GTP. Forms higher oligomers in the presence of a transition state GTP analog. Forms homomultimers and heteromultimers with MFN2. Oligomerization is essential for mitochondrion fusion. Component of a high molecular weight multiprotein complex. Interacts with VAT1. Interacts with THG1L; THG1L probably functions as a guanyl-nucleotide exchange factor/GEF, activating MFN1. In terms of processing, ubiquitinated by MARCHF5. When mitochondria are depolarized and dysfunctional, it is ubiquitinated by a SCF (SKP1-CUL1-F-box protein) E3 ubiquitin-protein ligase complex that contains FBXO7 and PRKN. Ubiquitinated by non-degradative ubiquitin by PRKN, promoting mitochondrial fusion; deubiquitination by USP30 inhibits mitochondrial fusion. In terms of tissue distribution, detected in adult heart. Detected in embryos (at protein level). Widely expressed.

The protein localises to the mitochondrion outer membrane. It carries out the reaction GTP + H2O = GDP + phosphate + H(+). Mitochondrial outer membrane GTPase that mediates mitochondrial clustering and fusion. Membrane clustering requires GTPase activity. It may involve a major rearrangement of the coiled coil domains. Mitochondria are highly dynamic organelles, and their morphology is determined by the equilibrium between mitochondrial fusion and fission events. Overexpression induces the formation of mitochondrial networks (in vitro). Has low GTPase activity. This is Mitofusin-1 (Mfn1) from Mus musculus (Mouse).